Here is a 295-residue protein sequence, read N- to C-terminus: Giardin subunit alpha-1 (295 aa).

4 Annexin repeats span residues 2–71, 73–143, 153–223, and 226–293; these read PKVT…MDLF, DRHE…MEKW, GSPE…AHFA, and GMHR…TLWR.

It belongs to the annexin family. Giardin subunit alpha subfamily.

The protein resides in the cytoplasm. It localises to the cytoskeleton. In terms of biological role, giardins are involved in parasite attachment to the intestinal mucosa and in the cytoskeletal disassembly and reassembly that marks the transition from infectious trophozoite to transmissible cyst. They may interact with other cytoskeletal proteins such as microtubules in the microribbons or crossbridges, to maintain the integrity of the ventral disk. The protein is Giardin subunit alpha-1 of Giardia intestinalis (Giardia lamblia).